The sequence spans 210 residues: Cell division protein SepF (210 aa).

Residues Gly13–Met78 form a disordered region. The span at Tyr22–Asp31 shows a compositional bias: acidic residues. The segment covering Arg47–Met60 has biased composition (basic and acidic residues). Over residues Val64–Met78 the composition is skewed to polar residues.

The protein belongs to the SepF family. As to quaternary structure, homodimer. Interacts with FtsZ.

It localises to the cytoplasm. Cell division protein that is part of the divisome complex and is recruited early to the Z-ring. Probably stimulates Z-ring formation, perhaps through the cross-linking of FtsZ protofilaments. Its function overlaps with FtsA. The polypeptide is Cell division protein SepF (Cyanothece sp. (strain PCC 7425 / ATCC 29141)).